We begin with the raw amino-acid sequence, 359 residues long: GalNAc-alpha-(1-&gt;4)-GalNAc-alpha-(1-&gt;3)-diNAcBac-PP-undecaprenol alpha-1,4-N-acetyl-D-galactosaminyltransferase (359 aa).

Glutamate 17 contacts substrate. Tyrosine 45 is a binding site for UDP-N-acetyl-alpha-D-galactosamine. 71–74 contributes to the substrate binding site; sequence RFKK. UDP-N-acetyl-alpha-D-galactosamine is bound by residues histidine 117, arginine 190, lysine 195, valine 246, and 266-274; that span reads EGLPTVLIE. Arginine 190 is a substrate binding site.

Belongs to the glycosyltransferase group 1 family.

The protein resides in the cell inner membrane. The catalysed reaction is N-acetyl-alpha-D-galactosaminyl-(1-&gt;4)-N-acetyl-alpha-D-galactosaminyl-(1-&gt;3)-N,N'-diacetyl-alpha-D-bacillosaminyl-tri-trans,heptacis-undecaprenyl diphosphate + 3 UDP-N-acetyl-alpha-D-galactosamine = [alpha-D-GalNAc-(1-&gt;4)]4-alpha-D-GalNAc-(1-&gt;3)-alpha-D-diNAcBac-tri-trans,hepta-cis-undecaprenyl diphosphate + 3 UDP + 3 H(+). It participates in protein modification; protein glycosylation. Processive glycosyltransferase that is part of the biosynthetic pathway of the lipid-linked oligosaccharide (LLO) that serves as the glycan donor in bacterial protein N-glycosylation. Catalyzes the transfer of exactly three alpha-(1-&gt;4)-N-acetylgalactosamine (GalNAc) units to the growing LLO precursor, GalNAc-alpha-(1-&gt;4)-GalNAc-alpha-(1-&gt;3)-diNAcBac-PP-undecaprenyl. Cannot accept UDP-GlcNAc as substrate. This chain is GalNAc-alpha-(1-&gt;4)-GalNAc-alpha-(1-&gt;3)-diNAcBac-PP-undecaprenol alpha-1,4-N-acetyl-D-galactosaminyltransferase, found in Campylobacter jejuni subsp. jejuni serotype O:2 (strain ATCC 700819 / NCTC 11168).